Here is a 232-residue protein sequence, read N- to C-terminus: Flagellar L-ring protein (232 aa).

A signal peptide spans 1-21 (MQKNAAHTYAISSLLVLSLTG). C22 carries N-palmitoyl cysteine lipidation. C22 is lipidated: S-diacylglycerol cysteine.

It belongs to the FlgH family. The basal body constitutes a major portion of the flagellar organelle and consists of four rings (L,P,S, and M) mounted on a central rod.

It is found in the cell outer membrane. The protein resides in the bacterial flagellum basal body. Assembles around the rod to form the L-ring and probably protects the motor/basal body from shearing forces during rotation. The protein is Flagellar L-ring protein of Shigella dysenteriae serotype 1 (strain Sd197).